A 172-amino-acid chain; its full sequence is Adenine phosphoribosyltransferase (172 aa).

It belongs to the purine/pyrimidine phosphoribosyltransferase family. Homodimer.

It localises to the cytoplasm. It carries out the reaction AMP + diphosphate = 5-phospho-alpha-D-ribose 1-diphosphate + adenine. Its pathway is purine metabolism; AMP biosynthesis via salvage pathway; AMP from adenine: step 1/1. Catalyzes a salvage reaction resulting in the formation of AMP, that is energically less costly than de novo synthesis. This Synechococcus sp. (strain CC9605) protein is Adenine phosphoribosyltransferase.